We begin with the raw amino-acid sequence, 227 residues long: MARGKIQIKRIENQTNRQVTYSKRRNGLFKKAHELSVLCDAKVSIIMISSTQKLHEYISPTTATKQLFDQYQKAVGVDLWSSHYEKMQEHLKKLNEVNRNLRREIRQRMGESLNDLGYEQIVNLIEDMDNSLKLIRERKYKVISNQIDTSKKKVRNVEEIHRNLVLEFDARREDPHFGLVDNEGDYNSVLGFPNGGPRIIALRLPTNHHPTLHSGGGSDLTTFALLE.

The MADS-box domain occupies 3–57 (RGKIQIKRIENQTNRQVTYSKRRNGLFKKAHELSVLCDAKVSIIMISSTQKLHEY). The K-box domain maps to 84 to 174 (YEKMQEHLKK…VLEFDARRED (91 aa)).

It localises to the nucleus. Transcription factor involved in the genetic control of flower development. Acts in conjunction with GLOBOSA (glo). In Antirrhinum majus (Garden snapdragon), this protein is Floral homeotic protein DEFICIENS (DEFA).